A 318-amino-acid polypeptide reads, in one-letter code: MTKNFLDFEQPIAELEAKIEELRNVGQDSEVNINEEIQRLEAKSRSLTEKIFSSLSAWQIVQLARHPERPYLFDYIERIFTDFQELHGDRAYADDAAIAGGVARFDGRPVMVIGQQKGRDTKEKVRRNFGMPRPEGYRKALRLMRMAERFGLPIFTFIDTPGAYPGVGAEERGQSEAIARNLAEMAQLRVPVICTVVGEGGSGGALAISVGNRLLMLRYSVYSVISPEGCASILWKSSERAADAAEAMQMAAERLHDLGIVDRVIPEPLGGAHRDYEAMAETLREALREEWARVGQMSPDELVADRHQRLAAIGQPQG.

The CoA carboxyltransferase C-terminal domain maps to 32–293 (NINEEIQRLE…REALREEWAR (262 aa)).

This sequence belongs to the AccA family. In terms of assembly, acetyl-CoA carboxylase is a heterohexamer composed of biotin carboxyl carrier protein (AccB), biotin carboxylase (AccC) and two subunits each of ACCase subunit alpha (AccA) and ACCase subunit beta (AccD).

It is found in the cytoplasm. The catalysed reaction is N(6)-carboxybiotinyl-L-lysyl-[protein] + acetyl-CoA = N(6)-biotinyl-L-lysyl-[protein] + malonyl-CoA. It participates in lipid metabolism; malonyl-CoA biosynthesis; malonyl-CoA from acetyl-CoA: step 1/1. Component of the acetyl coenzyme A carboxylase (ACC) complex. First, biotin carboxylase catalyzes the carboxylation of biotin on its carrier protein (BCCP) and then the CO(2) group is transferred by the carboxyltransferase to acetyl-CoA to form malonyl-CoA. This is Acetyl-coenzyme A carboxylase carboxyl transferase subunit alpha from Halorhodospira halophila (strain DSM 244 / SL1) (Ectothiorhodospira halophila (strain DSM 244 / SL1)).